Reading from the N-terminus, the 48-residue chain is Large ribosomal subunit protein bL36c (48 aa).

This sequence belongs to the bacterial ribosomal protein bL36 family.

It localises to the plastid. The protein localises to the chloroplast. The sequence is that of Large ribosomal subunit protein bL36c from Rhodomonas salina (Cryptomonas salina).